Here is a 337-residue protein sequence, read N- to C-terminus: Ferredoxin--NADP reductase (337 aa).

Residues Asp35, Gln43, Tyr48, Val88, Phe123, Asp289, and Thr330 each contribute to the FAD site.

Belongs to the ferredoxin--NADP reductase type 2 family. In terms of assembly, homodimer. FAD serves as cofactor.

It carries out the reaction 2 reduced [2Fe-2S]-[ferredoxin] + NADP(+) + H(+) = 2 oxidized [2Fe-2S]-[ferredoxin] + NADPH. The protein is Ferredoxin--NADP reductase of Paramagnetospirillum magneticum (strain ATCC 700264 / AMB-1) (Magnetospirillum magneticum).